Here is a 502-residue protein sequence, read N- to C-terminus: ATP synthase subunit alpha (502 aa).

ATP is bound at residue 169–176 (GDRQTGKT).

It belongs to the ATPase alpha/beta chains family. In terms of assembly, F-type ATPases have 2 components, CF(1) - the catalytic core - and CF(0) - the membrane proton channel. CF(1) has five subunits: alpha(3), beta(3), gamma(1), delta(1), epsilon(1). CF(0) has three main subunits: a(1), b(2) and c(9-12). The alpha and beta chains form an alternating ring which encloses part of the gamma chain. CF(1) is attached to CF(0) by a central stalk formed by the gamma and epsilon chains, while a peripheral stalk is formed by the delta and b chains.

The protein resides in the cell membrane. The enzyme catalyses ATP + H2O + 4 H(+)(in) = ADP + phosphate + 5 H(+)(out). Functionally, produces ATP from ADP in the presence of a proton gradient across the membrane. The alpha chain is a regulatory subunit. The chain is ATP synthase subunit alpha from Bacillus sp. (strain PS3).